The primary structure comprises 516 residues: Melianol synthase CYP71BQ17 (516 aa).

A helical membrane pass occupies residues 14–34; it reads MPHLPSLPVSLSFLLFFLMLV. Cysteine 454 is a binding site for heme.

Belongs to the cytochrome P450 family. Requires heme as cofactor. Mainly expressed in roots and, to a lesser extent, in stems and old leaves.

It localises to the membrane. The enzyme catalyses dihydroniloticin + 2 reduced [NADPH--hemoprotein reductase] + 2 O2 = melianol + 2 oxidized [NADPH--hemoprotein reductase] + 3 H2O + 2 H(+). It participates in secondary metabolite biosynthesis; terpenoid biosynthesis. In terms of biological role, monooxygenase involved in the biosynthesis of quassinoids triterpene natural products such as ailanthone, chaparrinone, glaucarubinone and amarolide, allelopathic degraded triterpene lactones inhibiting the growth of other plants, and possessing antimalarial, antifeedant, insecticidal, anti-inflammatory and anticancer activities. Catalyzes the conversion of dihydroniloticin to the protolimonoid melianol. This chain is Melianol synthase CYP71BQ17, found in Ailanthus altissima (Tree-of-heaven).